A 265-amino-acid chain; its full sequence is Energy-coupling factor transporter transmembrane protein EcfT (265 aa).

The next 6 membrane-spanning stretches (helical) occupy residues 26–46, 47–67, 72–92, 107–127, 152–172, and 243–263; these read MVFV…QTYA, VGII…MFLF, PILF…KGGA, VIMG…TTIM, LPVH…PTLM, and HTYD…ILYL.

Belongs to the energy-coupling factor EcfT family. As to quaternary structure, forms a stable energy-coupling factor (ECF) transporter complex composed of 2 membrane-embedded substrate-binding proteins (S component), 2 ATP-binding proteins (A component) and 2 transmembrane proteins (T component). May be able to interact with more than 1 S component at a time.

The protein localises to the cell membrane. Functionally, transmembrane (T) component of an energy-coupling factor (ECF) ABC-transporter complex. Unlike classic ABC transporters this ECF transporter provides the energy necessary to transport a number of different substrates. This Macrococcus caseolyticus (strain JCSC5402) (Macrococcoides caseolyticum) protein is Energy-coupling factor transporter transmembrane protein EcfT.